A 277-amino-acid chain; its full sequence is Putative phosphoenolpyruvate synthase regulatory protein (277 aa).

ADP is bound at residue 157 to 164 (GVSRCGKT).

This sequence belongs to the pyruvate, phosphate/water dikinase regulatory protein family. PSRP subfamily.

It catalyses the reaction [pyruvate, water dikinase] + ADP = [pyruvate, water dikinase]-phosphate + AMP + H(+). It carries out the reaction [pyruvate, water dikinase]-phosphate + phosphate + H(+) = [pyruvate, water dikinase] + diphosphate. Functionally, bifunctional serine/threonine kinase and phosphorylase involved in the regulation of the phosphoenolpyruvate synthase (PEPS) by catalyzing its phosphorylation/dephosphorylation. The polypeptide is Putative phosphoenolpyruvate synthase regulatory protein (Cronobacter sakazakii (strain ATCC BAA-894) (Enterobacter sakazakii)).